Here is a 467-residue protein sequence, read N- to C-terminus: Probable citrate synthase 2, mitochondrial (467 aa).

Residues His-303, His-349, and Asp-404 contribute to the active site.

Belongs to the citrate synthase family. As to quaternary structure, homodimer.

It localises to the mitochondrion matrix. It catalyses the reaction oxaloacetate + acetyl-CoA + H2O = citrate + CoA + H(+). It participates in carbohydrate metabolism; tricarboxylic acid cycle; isocitrate from oxaloacetate: step 1/2. This chain is Probable citrate synthase 2, mitochondrial, found in Aedes aegypti (Yellowfever mosquito).